Consider the following 182-residue polypeptide: Adenine phosphoribosyltransferase 4 (182 aa).

It belongs to the purine/pyrimidine phosphoribosyltransferase family. In terms of assembly, homodimer.

It is found in the cytoplasm. The enzyme catalyses AMP + diphosphate = 5-phospho-alpha-D-ribose 1-diphosphate + adenine. It functions in the pathway purine metabolism; AMP biosynthesis via salvage pathway; AMP from adenine: step 1/1. In terms of biological role, catalyzes a salvage reaction resulting in the formation of AMP, that is energically less costly than de novo synthesis. May contribute to the recycling of adenine into adenylate nucleotides and the inactivation of cytokinins by phosphoribosylation. Possesses low activity toward adenine, but can efficiently convert cytokinins from free bases (active form) to the corresponding nucleotides (inactive form). The chain is Adenine phosphoribosyltransferase 4 (APT4) from Arabidopsis thaliana (Mouse-ear cress).